The sequence spans 223 residues: Deoxyribose-phosphate aldolase (223 aa).

D89 functions as the Proton donor/acceptor in the catalytic mechanism. Catalysis depends on K152, which acts as the Schiff-base intermediate with acetaldehyde. K181 acts as the Proton donor/acceptor in catalysis.

The protein belongs to the DeoC/FbaB aldolase family. DeoC type 1 subfamily.

Its subcellular location is the cytoplasm. It carries out the reaction 2-deoxy-D-ribose 5-phosphate = D-glyceraldehyde 3-phosphate + acetaldehyde. It participates in carbohydrate degradation; 2-deoxy-D-ribose 1-phosphate degradation; D-glyceraldehyde 3-phosphate and acetaldehyde from 2-deoxy-alpha-D-ribose 1-phosphate: step 2/2. Functionally, catalyzes a reversible aldol reaction between acetaldehyde and D-glyceraldehyde 3-phosphate to generate 2-deoxy-D-ribose 5-phosphate. In Bacillus cereus (strain AH187), this protein is Deoxyribose-phosphate aldolase.